Here is a 512-residue protein sequence, read N- to C-terminus: Maturase K (512 aa).

Belongs to the intron maturase 2 family. MatK subfamily.

The protein localises to the plastid. The protein resides in the chloroplast. Functionally, usually encoded in the trnK tRNA gene intron. Probably assists in splicing its own and other chloroplast group II introns. The sequence is that of Maturase K from Amorphophallus paeoniifolius (Whitespot giant arum).